A 994-amino-acid polypeptide reads, in one-letter code: Glutamate [NMDA] receptor subunit 1 (994 aa).

The first 23 residues, 1-23, serve as a signal peptide directing secretion; that stretch reads MAADGFVYRWLLFGTTIVLLAEA. Over 24-570 the chain is Extracellular; sequence AQRHTASDNP…TLVSFLQPFS (547 aa). N-linked (GlcNAc...) asparagine glycans are attached at residues Asn-255, Asn-311, Asn-342, Asn-394, Asn-451, Asn-478, and Asn-498. Glycine-binding positions include 527-529 and Arg-534; that span reads PLT. A helical transmembrane segment spans residues 571–591; it reads NTLWILVMVSVHVVALVLYLL. Residues 592–648 lie on the Cytoplasmic side of the membrane; sequence DRFSPFGRFKLSHSDSNEEKALNLSSAVWFAWGVLLNSGIGEGTPRSFSARVLGMVW. A helical transmembrane segment spans residues 649–669; that stretch reads AGFAMIIVASYTANLAAFLVL. Over 670-828 the chain is Extracellular; that stretch reads ERPKTKLSGI…KTPNTLGLKN (159 aa). N-linked (GlcNAc...) asparagine glycosylation occurs at Asn-690. Glycine-binding residues include Ser-700 and Asp-744. A helical membrane pass occupies residues 829–849; sequence MAGVFILVGVGIAGGVGLIII. At 850-994 the chain is on the cytoplasmic side; the sequence is EVIYKKHQVK…YTSDVSHLVV (145 aa). Positions 971 to 994 are disordered; that stretch reads RPQQNMLPPRYSPGYTSDVSHLVV. Positions 984 to 994 are enriched in polar residues; the sequence is GYTSDVSHLVV.

The protein belongs to the glutamate-gated ion channel (TC 1.A.10.1) family. In terms of assembly, forms a heteromeric NMDA channel with Nmdar2.

It is found in the cell membrane. It localises to the postsynaptic cell membrane. The protein localises to the postsynaptic density. Functionally, NMDA receptor subtype of glutamate-gated ion channels with high calcium permeability and voltage-dependent sensitivity to magnesium. Mediated by glycine. This protein plays a key role in synaptic plasticity, synaptogenesis, excitotoxicity, memory acquisition and learning. It mediates neuronal functions in glutamate neurotransmission. Is involved in the cell surface targeting of NMDA receptors. Plays a role in associative learning and in long-term memory consolidation. This chain is Glutamate [NMDA] receptor subunit 1, found in Drosophila ananassae (Fruit fly).